A 72-amino-acid chain; its full sequence is Alpha-elapitoxin-Dv2b (72 aa).

5 disulfides stabilise this stretch: Cys-3–Cys-21, Cys-14–Cys-42, Cys-27–Cys-31, Cys-46–Cys-57, and Cys-58–Cys-63.

It belongs to the three-finger toxin family. Long-chain subfamily. Type II alpha-neurotoxin sub-subfamily. In terms of processing, neurotoxin 4.7.3 differs from 4.9.3 only in that Trp-26 has undergone partial photooxidation. In terms of tissue distribution, expressed by the venom gland.

It is found in the secreted. Binds with high affinity to muscular (alpha-1/CHRNA1) and neuronal (alpha-7/CHRNA7) nicotinic acetylcholine receptor (nAChR) and inhibits acetylcholine from binding to the receptor, thereby impairing neuromuscular and neuronal transmission. The protein is Alpha-elapitoxin-Dv2b of Dendroaspis viridis (Western green mamba).